Reading from the N-terminus, the 239-residue chain is 4-hydroxy-tetrahydrodipicolinate reductase (239 aa).

Residues 8 to 13, 78 to 80, and 102 to 105 each bind NAD(+); these read GSTGKM, GTT, and SANM. Catalysis depends on H134, which acts as the Proton donor/acceptor. H135 serves as a coordination point for (S)-2,3,4,5-tetrahydrodipicolinate. The Proton donor role is filled by K138. A (S)-2,3,4,5-tetrahydrodipicolinate-binding site is contributed by 144 to 145; that stretch reads GT.

This sequence belongs to the DapB family.

The protein resides in the cytoplasm. The catalysed reaction is (S)-2,3,4,5-tetrahydrodipicolinate + NAD(+) + H2O = (2S,4S)-4-hydroxy-2,3,4,5-tetrahydrodipicolinate + NADH + H(+). The enzyme catalyses (S)-2,3,4,5-tetrahydrodipicolinate + NADP(+) + H2O = (2S,4S)-4-hydroxy-2,3,4,5-tetrahydrodipicolinate + NADPH + H(+). Its pathway is amino-acid biosynthesis; L-lysine biosynthesis via DAP pathway; (S)-tetrahydrodipicolinate from L-aspartate: step 4/4. In terms of biological role, catalyzes the conversion of 4-hydroxy-tetrahydrodipicolinate (HTPA) to tetrahydrodipicolinate. This chain is 4-hydroxy-tetrahydrodipicolinate reductase, found in Rickettsia peacockii (strain Rustic).